A 1257-amino-acid polypeptide reads, in one-letter code: Period circadian protein homolog 2 (1257 aa).

The interval 1–60 (MNGYVDFSPSPTSPTKEPGAPQPTQAVLQEDVDMSSGSSGNENCSTGRDSQGSDCDDNGK) is disordered. The span at 35 to 53 (SSGSSGNENCSTGRDSQGS) shows a compositional bias: polar residues. The short motif at 109–118 (LIRTLKELKV) is the Nuclear export signal 1 element. A PAS 1 domain is found at 179–246 (ITSEYIVKNA…FHSYTTPYKL (68 aa)). The LXXLL motif lies at 306–310 (LCCLL). Positions 319 to 385 (YEAPRIPPEK…MLAIHKKILQ (67 aa)) constitute a PAS 2 domain. Residues 393–436 (YSPIRFRTRNGEYITLDTSWSSFINPWSRKISFIIGRHKVRVGP) enclose the PAC domain. The Nuclear export signal 2 signature appears at 460–469 (LTEQIHRLLM). 2 disordered regions span residues 471 to 565 (PVPH…GASL) and 617 to 638 (PSRK…PSKV). The important for protein stability stretch occupies residues 478-482 (SGYGS). The segment covering 493-504 (MSQTSSSDSNGQ) has biased composition (polar residues). The tract at residues 510-709 (RRSGIFKTSG…GAAGGLSQEK (200 aa)) is CSNK1E binding domain. Phosphoserine occurs at positions 525, 528, 531, 538, and 544. The residue at position 554 (Thr554) is a Phosphothreonine. Phosphoserine occurs at positions 659, 693, 697, 706, 758, and 763. Residues 757-832 (RSRAQASDRG…SDTSQSSCPS (76 aa)) are disordered. Residues 778 to 794 (KKTGKNRKLKSKRVKTR) carry the Nuclear localization signal motif. Basic residues predominate over residues 779 to 792 (KTGKNRKLKSKRVK). The span at 821 to 832 (SPSDTSQSSCPS) shows a compositional bias: low complexity. Position 858 is a phosphothreonine (Thr858). Positions 882 to 1067 (EFAVQPLPFA…DLCSATGSAL (186 aa)) are interaction with PPARG. Ser939 carries the phosphoserine modification. A Phosphothreonine modification is found at Thr964. Phosphoserine is present on Ser971. A Nuclear export signal 3 motif is present at residues 983–990 (LQLNLLQL). The interval 994–1044 (PEGSTGAAGTLGTTGTAASGLDCTSGTSRDRQPKAPPTCNEPSDTQNSDAI) is disordered. Residues 996-1014 (GSTGAAGTLGTTGTAASGL) show a composition bias toward low complexity. The span at 1033 to 1044 (NEPSDTQNSDAI) shows a compositional bias: polar residues. Residues 1051-1055 (LNLLL) carry the LXXLL motif. Positions 1070–1092 (SGASATSDSLGSSSLGFGTSQSG) are enriched in low complexity. Positions 1070–1115 (SGASATSDSLGSSSLGFGTSQSGAGSSDTSHTSKYFGSIDSSENNH) are disordered. Residues 1093–1111 (AGSSDTSHTSKYFGSIDSS) are compositionally biased toward polar residues. Ser1126 carries the phosphoserine modification. The tract at residues 1157–1257 (SRDLQAVLKE…LTGPRIEAQT (101 aa)) is CRY binding domain. Positions 1224–1257 (PYEEDSPSPGLCDTSEAKEEEGEQLTGPRIEAQT) are disordered.

In terms of assembly, homodimer. Component of the circadian core oscillator, which includes the CRY proteins, CLOCK or NPAS2, BMAL1 or BMAL2, CSNK1D and/or CSNK1E, TIMELESS, and the PER proteins. Interacts with CLOCK-BMAL1 (off DNA). Interacts with BMAL2. Interacts directly with PER1 and PER3, and through a C-terminal domain, with CRY1 and CRY2. Interacts (via PAS 2 domain) with TIMELESS. Interacts with NFIL3. Different large complexes have been identified with different repressive functions. The core of PER complexes is composed of at least PER1, PER2, PER3, CRY1, CRY2, CSNK1D and/or CSNK1E. The large PER complex involved in the repression of transcriptional termination is composed of at least PER2, CDK9, DDX5, DHX9, NCBP1 and POLR2A (active). The large PER complex involved in the histone deacetylation is composed of at least HDAC1, PER2, SFPQ and SIN3A. The large PER complex involved in the histone methylation is composed of at least PER2, CBX3, TRIM28, SUV39H1 and/or SUV39H2; CBX3 mediates the formation of the complex. Interacts with SETX; the interaction inhibits termination of circadian target genes. Interacts with the nuclear receptors HNF4A, NR1D1, NR4A2, RORA, PPARA, PPARG and THRA; the interaction with at least PPARG is ligand dependent. Interacts with PML. Interacts (phosphorylated) with BTRC and FBXW11; the interactions trigger proteasomal degradation. Interacts with NONO and SFPQ. Interacts with CAVIN3. Interacts with MAGEL2. Interacts with MAP1LC3B. Interacts with HNF4A. In terms of processing, acetylated. Deacetylated by SIRT1, resulting in decreased protein stability. Deacetylated by SIRT6, preventing its degradation by the proteasome, resulting in increased protein stability. Phosphorylated by CSNK1E and CSNK1D. Phosphorylation results in PER2 protein degradation. May be dephosphorylated by PP1. Post-translationally, ubiquitinated, leading to its proteasomal degradation. Ubiquitination may be inhibited by CRY1. As to expression, in the brain, high expression in SCN during the subjective day. Constitutive expression in the cornu ammonis and in the dentate gyrus of the hippocampus. Also expressed in the piriform cortex and the glomeruli of the olfactory bulb, and at a lower extent in the cerebral cortex. Not expressed in the pars tuberalis and the Purkinje neurons. Also expressed in adipose tissue (white and brown), heart, kidney, bladder, lumbar spinal cord, skeletal muscle, spleen, lung, pancreas and liver with highest levels in skeletal muscle and liver and lowest levels in spleen.

The protein localises to the nucleus. It localises to the cytoplasm. Its subcellular location is the perinuclear region. Functionally, transcriptional repressor which forms a core component of the circadian clock. The circadian clock, an internal time-keeping system, regulates various physiological processes through the generation of approximately 24 hour circadian rhythms in gene expression, which are translated into rhythms in metabolism and behavior. It is derived from the Latin roots 'circa' (about) and 'diem' (day) and acts as an important regulator of a wide array of physiological functions including metabolism, sleep, body temperature, blood pressure, endocrine, immune, cardiovascular, and renal function. Consists of two major components: the central clock, residing in the suprachiasmatic nucleus (SCN) of the brain, and the peripheral clocks that are present in nearly every tissue and organ system. Both the central and peripheral clocks can be reset by environmental cues, also known as Zeitgebers (German for 'timegivers'). The predominant Zeitgeber for the central clock is light, which is sensed by retina and signals directly to the SCN. The central clock entrains the peripheral clocks through neuronal and hormonal signals, body temperature and feeding-related cues, aligning all clocks with the external light/dark cycle. Circadian rhythms allow an organism to achieve temporal homeostasis with its environment at the molecular level by regulating gene expression to create a peak of protein expression once every 24 hours to control when a particular physiological process is most active with respect to the solar day. Transcription and translation of core clock components (CLOCK, NPAS2, BMAL1, BMAL2, PER1, PER2, PER3, CRY1 and CRY2) plays a critical role in rhythm generation, whereas delays imposed by post-translational modifications (PTMs) are important for determining the period (tau) of the rhythms (tau refers to the period of a rhythm and is the length, in time, of one complete cycle). A diurnal rhythm is synchronized with the day/night cycle, while the ultradian and infradian rhythms have a period shorter and longer than 24 hours, respectively. Disruptions in the circadian rhythms contribute to the pathology of cardiovascular diseases, cancer, metabolic syndrome and aging. A transcription/translation feedback loop (TTFL) forms the core of the molecular circadian clock mechanism. Transcription factors, CLOCK or NPAS2 and BMAL1 or BMAL2, form the positive limb of the feedback loop, act in the form of a heterodimer and activate the transcription of core clock genes and clock-controlled genes (involved in key metabolic processes), harboring E-box elements (5'-CACGTG-3') within their promoters. The core clock genes: PER1/2/3 and CRY1/2 which are transcriptional repressors form the negative limb of the feedback loop and interact with the CLOCK|NPAS2-BMAL1|BMAL2 heterodimer inhibiting its activity and thereby negatively regulating their own expression. This heterodimer also activates nuclear receptors NR1D1/2 and RORA/B/G, which form a second feedback loop and which activate and repress BMAL1 transcription, respectively. PER1 and PER2 proteins transport CRY1 and CRY2 into the nucleus with appropriate circadian timing, but also contribute directly to repression of clock-controlled target genes through interaction with several classes of RNA-binding proteins, helicases and others transcriptional repressors. PER appears to regulate circadian control of transcription by at least three different modes. First, interacts directly with the CLOCK-BMAL1 at the tail end of the nascent transcript peak to recruit complexes containing the SIN3-HDAC that remodel chromatin to repress transcription. Second, brings H3K9 methyltransferases such as SUV39H1 and SUV39H2 to the E-box elements of the circadian target genes, like PER2 itself or PER1. The recruitment of each repressive modifier to the DNA seems to be very precisely temporally orchestrated by the large PER complex, the deacetylases acting before than the methyltransferases. Additionally, large PER complexes are also recruited to the target genes 3' termination site through interactions with RNA-binding proteins and helicases that may play a role in transcription termination to regulate transcription independently of CLOCK-BMAL1 interactions. Recruitment of large PER complexes to the elongating polymerase at PER and CRY termination sites inhibited SETX action, impeding RNA polymerase II release and thereby repressing transcriptional reinitiation. May propagate clock information to metabolic pathways via the interaction with nuclear receptors. Coactivator of PPARA and corepressor of NR1D1, binds rhythmically at the promoter of nuclear receptors target genes like BMAL1 or G6PC1. Directly and specifically represses PPARG proadipogenic activity by blocking PPARG recruitment to target promoters and thereby transcriptional activation. Required for fatty acid and lipid metabolism, is involved as well in the regulation of circulating insulin levels. Plays an important role in the maintenance of cardiovascular functions through the regulation of NO and vasodilatatory prostaglandins production in aortas. Controls circadian glutamate uptake in synaptic vesicles through the regulation of VGLUT1 expression. May also be involved in the regulation of inflammatory processes. Represses the CLOCK-BMAL1 induced transcription of BHLHE40/DEC1 and ATF4. Negatively regulates the formation of the TIMELESS-CRY1 complex by competing with TIMELESS for binding to CRY1. This is Period circadian protein homolog 2 (Per2) from Mus musculus (Mouse).